The following is a 253-amino-acid chain: Short-chain dehydrogenase/reductase ATR9 (253 aa).

NADP(+) is bound by residues Ser-15, Ser-16, Ile-18, Ser-38, Asn-39, Arg-42, Asp-65, and Lys-129. Ser-147 acts as the Proton donor in catalysis. Thr-194 provides a ligand contact to NADP(+).

The protein belongs to the short-chain dehydrogenases/reductases (SDR) family.

The protein operates within mycotoxin biosynthesis. In terms of biological role, short-chain dehydrogenase/reductase; part of the core atranone cluster (CAC) which products are predicted to catalyze most or all steps of mycotoxin atranone synthesis, starting from geranylgeranyl pyrophosphate (GGPP). The initial cyclization of GGPP to dolabellane is probably performed by the terpene cyclase ATR13. The Baeyer-Villiger oxidation near the end of the atranone synthesis, which converts atranones D and E to atranones F and G is predicted to be catalyzed by the monooxygenase ATR8. Of the CAC's other predicted gene products, the reducing PKS ATR6 might synthesize a polyketide chain. This polyketide is probably transferred onto the atranone backbone by the polyketide transferase ATR5. Other predicted CAC products include 4 oxygenases (ATR2, ATR3, ATR4, and ATR14), 3 short-chain reductases (ATR7, ATR9, and ATR10), and a methyltransferase (ATR12). These may all be involved in the various steps of atranone biosynthesis, although their specific roles must await experimental determination. The polypeptide is Short-chain dehydrogenase/reductase ATR9 (Stachybotrys chlorohalonatus (strain IBT 40285)).